Reading from the N-terminus, the 275-residue chain is 4-hydroxy-tetrahydrodipicolinate reductase (275 aa).

NAD(+) is bound by residues 13 to 18 (GAAGKM), 108 to 110 (GTT), and 134 to 137 (VPNF). The active-site Proton donor/acceptor is His164. His165 contributes to the (S)-2,3,4,5-tetrahydrodipicolinate binding site. The active-site Proton donor is the Lys168. A (S)-2,3,4,5-tetrahydrodipicolinate-binding site is contributed by 174–175 (GT).

This sequence belongs to the DapB family.

Its subcellular location is the cytoplasm. It carries out the reaction (S)-2,3,4,5-tetrahydrodipicolinate + NAD(+) + H2O = (2S,4S)-4-hydroxy-2,3,4,5-tetrahydrodipicolinate + NADH + H(+). The catalysed reaction is (S)-2,3,4,5-tetrahydrodipicolinate + NADP(+) + H2O = (2S,4S)-4-hydroxy-2,3,4,5-tetrahydrodipicolinate + NADPH + H(+). Its pathway is amino-acid biosynthesis; L-lysine biosynthesis via DAP pathway; (S)-tetrahydrodipicolinate from L-aspartate: step 4/4. Functionally, catalyzes the conversion of 4-hydroxy-tetrahydrodipicolinate (HTPA) to tetrahydrodipicolinate. The polypeptide is 4-hydroxy-tetrahydrodipicolinate reductase (Gloeothece citriformis (strain PCC 7424) (Cyanothece sp. (strain PCC 7424))).